Here is a 373-residue protein sequence, read N- to C-terminus: Chaperone protein DnaJ (373 aa).

One can recognise a J domain in the interval 4–68 (DYYEILGLTK…VKREQYNQFG (65 aa)). The CR-type zinc finger occupies 142-224 (GKEIVEPLEK…CKGKTHTKTT (83 aa)). Zn(2+) contacts are provided by Cys-155, Cys-158, Cys-172, Cys-175, Cys-198, Cys-201, Cys-212, and Cys-215. 4 CXXCXGXG motif repeats span residues 155–162 (CNTCNGSG), 172–179 (CTQCSGMG), 198–205 (CSKCNGIG), and 212–219 (CLICKGKT).

This sequence belongs to the DnaJ family. As to quaternary structure, homodimer. It depends on Zn(2+) as a cofactor.

It is found in the cytoplasm. Functionally, participates actively in the response to hyperosmotic and heat shock by preventing the aggregation of stress-denatured proteins and by disaggregating proteins, also in an autonomous, DnaK-independent fashion. Unfolded proteins bind initially to DnaJ; upon interaction with the DnaJ-bound protein, DnaK hydrolyzes its bound ATP, resulting in the formation of a stable complex. GrpE releases ADP from DnaK; ATP binding to DnaK triggers the release of the substrate protein, thus completing the reaction cycle. Several rounds of ATP-dependent interactions between DnaJ, DnaK and GrpE are required for fully efficient folding. Also involved, together with DnaK and GrpE, in the DNA replication of plasmids through activation of initiation proteins. This is Chaperone protein DnaJ from Mycoplasma mobile (strain ATCC 43663 / 163K / NCTC 11711) (Mesomycoplasma mobile).